The primary structure comprises 157 residues: uncharacterized protein (157 aa).

This is an uncharacterized protein from Aquifex aeolicus (strain VF5).